Consider the following 265-residue polypeptide: Oxygen-evolving enhancer protein 2-2, chloroplastic (265 aa).

A chloroplast-targeting transit peptide spans 1–79 (MASTQCFLHH…VGSKVSPADA (79 aa)).

It belongs to the PsbP family.

It is found in the plastid. Its subcellular location is the chloroplast thylakoid membrane. Functionally, may be involved in the regulation of photosystem II. The sequence is that of Oxygen-evolving enhancer protein 2-2, chloroplastic (PSBP2) from Nicotiana tabacum (Common tobacco).